Consider the following 256-residue polypeptide: Ubiquinone/menaquinone biosynthesis C-methyltransferase UbiE (256 aa).

S-adenosyl-L-methionine is bound by residues Thr79, Asp100, and 128-129 (DA).

The protein belongs to the class I-like SAM-binding methyltransferase superfamily. MenG/UbiE family.

The enzyme catalyses a 2-demethylmenaquinol + S-adenosyl-L-methionine = a menaquinol + S-adenosyl-L-homocysteine + H(+). It catalyses the reaction a 2-methoxy-6-(all-trans-polyprenyl)benzene-1,4-diol + S-adenosyl-L-methionine = a 5-methoxy-2-methyl-3-(all-trans-polyprenyl)benzene-1,4-diol + S-adenosyl-L-homocysteine + H(+). The protein operates within quinol/quinone metabolism; menaquinone biosynthesis; menaquinol from 1,4-dihydroxy-2-naphthoate: step 2/2. It participates in cofactor biosynthesis; ubiquinone biosynthesis. In terms of biological role, methyltransferase required for the conversion of demethylmenaquinol (DMKH2) to menaquinol (MKH2) and the conversion of 2-polyprenyl-6-methoxy-1,4-benzoquinol (DDMQH2) to 2-polyprenyl-3-methyl-6-methoxy-1,4-benzoquinol (DMQH2). This Pseudomonas syringae pv. tomato (strain ATCC BAA-871 / DC3000) protein is Ubiquinone/menaquinone biosynthesis C-methyltransferase UbiE.